The sequence spans 108 residues: T cell receptor alpha variable 1-1 (108 aa).

A signal peptide spans 1 to 18 (MWGAFLLYVSMKMGGTAG). Residues 19 to 108 (QSLEQPSEVT…DSASYFCAVR (90 aa)) enclose the Ig-like domain. N-linked (GlcNAc...) asparagine glycosylation occurs at asparagine 38. A disulfide bond links cysteine 39 and cysteine 105.

Alpha-beta TR is a heterodimer composed of an alpha and beta chain; disulfide-linked. The alpha-beta TR is associated with the transmembrane signaling CD3 coreceptor proteins to form the TR-CD3 (TcR or TCR). The assembly of alpha-beta TR heterodimers with CD3 occurs in the endoplasmic reticulum where a single alpha-beta TR heterodimer associates with one CD3D-CD3E heterodimer, one CD3G-CD3E heterodimer and one CD247 homodimer forming a stable octameric structure. CD3D-CD3E and CD3G-CD3E heterodimers preferentially associate with TR alpha and TR beta chains, respectively. The association of the CD247 homodimer is the last step of TcR assembly in the endoplasmic reticulum and is required for transport to the cell surface.

Its subcellular location is the cell membrane. In terms of biological role, v region of the variable domain of T cell receptor (TR) alpha chain that participates in the antigen recognition. Alpha-beta T cell receptors are antigen specific receptors which are essential to the immune response and are present on the cell surface of T lymphocytes. Recognize peptide-major histocompatibility (MH) (pMH) complexes that are displayed by antigen presenting cells (APC), a prerequisite for efficient T cell adaptive immunity against pathogens. Binding of alpha-beta TR to pMH complex initiates TR-CD3 clustering on the cell surface and intracellular activation of LCK that phosphorylates the ITAM motifs of CD3G, CD3D, CD3E and CD247 enabling the recruitment of ZAP70. In turn ZAP70 phosphorylates LAT, which recruits numerous signaling molecules to form the LAT signalosome. The LAT signalosome propagates signal branching to three major signaling pathways, the calcium, the mitogen-activated protein kinase (MAPK) kinase and the nuclear factor NF-kappa-B (NF-kB) pathways, leading to the mobilization of transcription factors that are critical for gene expression and essential for T cell growth and differentiation. The T cell repertoire is generated in the thymus, by V-(D)-J rearrangement. This repertoire is then shaped by intrathymic selection events to generate a peripheral T cell pool of self-MH restricted, non-autoaggressive T cells. Post-thymic interaction of alpha-beta TR with the pMH complexes shapes TR structural and functional avidity. In Homo sapiens (Human), this protein is T cell receptor alpha variable 1-1.